The chain runs to 680 residues: Conserved oligomeric Golgi complex subunit 6 (680 aa).

Positions 479–517 are disordered; it reads HKSKKSGQLPRRSRTSSDSSQLTSVDALLSSSPSPPQNN.

The protein belongs to the COG6 family. Component of the conserved oligomeric Golgi complex which is composed of eight different subunits and is required for normal Golgi morphology and localization. Interacts with COG5, COG7 and COG8.

The protein localises to the golgi apparatus membrane. Functionally, required for normal Golgi function. In Arabidopsis thaliana (Mouse-ear cress), this protein is Conserved oligomeric Golgi complex subunit 6.